A 911-amino-acid polypeptide reads, in one-letter code: Golgin IMH1 (911 aa).

Disordered stretches follow at residues 16-41 (LAKG…SGLP) and 271-314 (KELP…ETVD). Residues 101 to 280 (FFQDLNNKNN…KELPKAISHQ (180 aa)) are a coiled coil. The segment covering 286–299 (NRRKKNRNKGKKNK) has biased composition (basic residues). 2 positions are modified to phosphoserine: Ser-308 and Ser-660. Coiled coils occupy residues 312–735 (TVDN…ALKH) and 766–814 (SKAD…KERQ). The disordered stretch occupies residues 814-850 (QYSDKSGRVSRSGSIGTLANANIDSSPANNSNPTKLE). Over residues 822-847 (VSRSGSIGTLANANIDSSPANNSNPT) the composition is skewed to polar residues. Residue Ser-827 is modified to Phosphoserine. Thr-830 carries the post-translational modification Phosphothreonine. One can recognise a GRIP domain in the interval 861-909 (DSEKNEKIAYIKNVLLGFLEHKEQRNQLLPVISMLLQLDSTDEKRLVMS).

As to quaternary structure, forms oligomers and is present in high-molecular-mass complexes. Interacts with ARL1.

It localises to the cytoplasm. The protein resides in the golgi apparatus membrane. Functionally, involved in vesicular transport between an endosomal compartment and the Golgi apparatus. In Saccharomyces cerevisiae (strain ATCC 204508 / S288c) (Baker's yeast), this protein is Golgin IMH1 (IMH1).